Reading from the N-terminus, the 751-residue chain is ATP-dependent DNA helicase Hel308 (751 aa).

Residues Gln-20 and 39–46 (IPTASGKT) each bind ATP. Residues 26–196 (EGLLDKSKNF…WLNAKLVTDE (171 aa)) enclose the Helicase ATP-binding domain. Residues 143–146 (DEIH) carry the DEAH box motif. The region spanning 235 to 435 (NLTDLIVDSV…VLRVHILGLI (201 aa)) is the Helicase C-terminal domain.

It belongs to the helicase family. Hel308 subfamily. In terms of assembly, monomer.

It carries out the reaction Couples ATP hydrolysis with the unwinding of duplex DNA by translocating in the 3'-5' direction.. The catalysed reaction is ATP + H2O = ADP + phosphate + H(+). Its function is as follows. DNA-dependent ATPase and 3'-5' DNA helicase that may be involved in repair of stalled replication forks. This is ATP-dependent DNA helicase Hel308 from Methanococcus vannielii (strain ATCC 35089 / DSM 1224 / JCM 13029 / OCM 148 / SB).